The primary structure comprises 660 residues: Squalene--hopene cyclase (660 aa).

The PFTB 1 repeat unit spans residues 73–114; the sequence is EAKIGNYLRRVQGAHGGWPLVHDGEFDMSASVKAYFALKMIG. Asp394 serves as the catalytic Proton donor. PFTB repeat units lie at residues 419–460 and 536–586; these read IDRG…GALL and IRKA…ALMA.

The protein belongs to the terpene cyclase/mutase family.

The protein resides in the cell membrane. It carries out the reaction squalene = hop-22(29)-ene. The enzyme catalyses squalene + H2O = hopan-22-ol. It functions in the pathway secondary metabolite biosynthesis; hopanoid biosynthesis. Its function is as follows. Catalyzes the cyclization of squalene into hopene. The polypeptide is Squalene--hopene cyclase (shc) (Bradyrhizobium diazoefficiens (strain JCM 10833 / BCRC 13528 / IAM 13628 / NBRC 14792 / USDA 110)).